The primary structure comprises 342 residues: MQTLQTTSLRVADNQLFILDQQALPQEKRWLDASTVEALVGHIHALRVRGAPLIGLSASLLLALLAENGHSRDQLAVALDTLRASRPTAVNLMNNLDRMKQALWQEDFVPALVTEALRLIEEDKQLCDAIARAGSQLVKPGSRLLTHCNTGGLATAGVGTALGVIAHAFAAGNVNNVWVDETRPLLQGGRLTAWELGELGVPYQLITDSMAASLMAKGQVDAVWVGADRIAANGDVANKIGTYSLAVLAKFHGIPFYVAAPQTTLDPHCPNGEAIPIEQRDAREVTGVAGSFGAVQWAPENAQVYNPAFDVTPAALISGWVLDTGVVLPEAVEQGVFKSSAV.

Residues R49 to A51, R86, and Q187 each bind substrate. Catalysis depends on D228, which acts as the Proton donor. N238–K239 contributes to the substrate binding site.

This sequence belongs to the eIF-2B alpha/beta/delta subunits family. MtnA subfamily.

It catalyses the reaction 5-(methylsulfanyl)-alpha-D-ribose 1-phosphate = 5-(methylsulfanyl)-D-ribulose 1-phosphate. It functions in the pathway amino-acid biosynthesis; L-methionine biosynthesis via salvage pathway; L-methionine from S-methyl-5-thio-alpha-D-ribose 1-phosphate: step 1/6. Catalyzes the interconversion of methylthioribose-1-phosphate (MTR-1-P) into methylthioribulose-1-phosphate (MTRu-1-P). The sequence is that of Methylthioribose-1-phosphate isomerase from Enterobacter sp. (strain 638).